Here is a 386-residue protein sequence, read N- to C-terminus: Heat-inducible transcription repressor HrcA (386 aa).

Belongs to the HrcA family.

Negative regulator of class I heat shock genes (grpE-dnaK-dnaJ and groELS operons). Prevents heat-shock induction of these operons. The chain is Heat-inducible transcription repressor HrcA from Chlamydia caviae (strain ATCC VR-813 / DSM 19441 / 03DC25 / GPIC) (Chlamydophila caviae).